A 481-amino-acid chain; its full sequence is Glutamyl-tRNA(Gln) amidotransferase subunit A (481 aa).

Active-site charge relay system residues include Lys76 and Ser151. The Acyl-ester intermediate role is filled by Ser175.

Belongs to the amidase family. GatA subfamily. As to quaternary structure, heterotrimer of A, B and C subunits.

It carries out the reaction L-glutamyl-tRNA(Gln) + L-glutamine + ATP + H2O = L-glutaminyl-tRNA(Gln) + L-glutamate + ADP + phosphate + H(+). Its function is as follows. Allows the formation of correctly charged Gln-tRNA(Gln) through the transamidation of misacylated Glu-tRNA(Gln) in organisms which lack glutaminyl-tRNA synthetase. The reaction takes place in the presence of glutamine and ATP through an activated gamma-phospho-Glu-tRNA(Gln). The sequence is that of Glutamyl-tRNA(Gln) amidotransferase subunit A from Neisseria meningitidis serogroup B (strain ATCC BAA-335 / MC58).